Reading from the N-terminus, the 528-residue chain is Calcium-dependent protein kinase 4 (528 aa).

Residues 1–16 (MGQEMSTQSDMQNENQ) show a composition bias toward polar residues. Residues 1–36 (MGQEMSTQSDMQNENQKGNKRNLKGSQGKNGLKERS) form a disordered region. G2 is lipidated: N-myristoyl glycine. Residues 70-328 (YKGIKILGKG…ARDALEHEWI (259 aa)) enclose the Protein kinase domain. ATP contacts are provided by residues 76 to 84 (LGKGSFGEV) and K99. D193 serves as the catalytic Proton acceptor. The J domain autoinhibitory motif motif lies at 350-358 (NIKQFQSTQ). The interval 350–386 (NIKQFQSTQKLAQAALLYMGSKLTTIDETKELTKIFK) is j domain. The J domain EF-hand interaction motif motif lies at 359–368 (KLAQAALLYM). 4 EF-hand domains span residues 376 to 411 (DETK…LLKL), 423 to 458 (AIEV…RKLL), 459 to 494 (LSTE…GDVS), and 498 to 528 (WKTV…LCNY). Residues D389, N391, D393, Q395, E400, D436, D438, N440, Y442, E447, D472, D474, S476, K478, E483, D506, N508, D510, E512, and E517 each coordinate Ca(2+).

The protein belongs to the protein kinase superfamily. Ser/Thr protein kinase family. CDPK subfamily. May interact with the pre-replication MCM complex prior male gametogenesis activation. Requires Mg(2+) as cofactor. In terms of processing, myristoylated; myristoylation may target it to different subcellular compartments. During male gametogenesis, myristoylation is required to initiate DNA replication but not for mitotic spindle assembly or axoneme activation. Not palmitoylated. Post-translationally, may be autophosphorylated on Thr-234 in vitro.

The protein resides in the cytoplasm. The protein localises to the membrane. It localises to the chromosome. The catalysed reaction is L-seryl-[protein] + ATP = O-phospho-L-seryl-[protein] + ADP + H(+). It carries out the reaction L-threonyl-[protein] + ATP = O-phospho-L-threonyl-[protein] + ADP + H(+). Activated by calcium. Upon calcium binding to the EF-hand domains, the C-terminus of the junction domain (J domain) undergoes a conformational change which results in the dissociation of the pseudo-substrate inhibitory motif from the catalytic domain. This, in turn, may facilitate the autophosphorylation of the activation loop at Thr-234, which leads to the kinase activation. Intracellular calcium increase is triggered by xanthurenic acid (XA), a small mosquito molecule that induces the differentiation of specialized transmission stages, the gametocytes, into male and female gametes. Activated by a decrease in temperature (20 degrees Celsius) and an increase in pH (7.6) occurring when the parasite is ingested by in the mosquito. Its function is as follows. Calcium-dependent protein kinase which acts as a sensor and effector of intracellular Ca(2+) levels probably in part downstream of cGMP-activated PKG kinase. Plays a central role in the host erythrocytes and hepatocytes infection cycles, sexual reproduction and mosquito transmission of the parasite. During the liver stage, involved in sporozoite motility and thus in sporozoite invasion of host hepatocytes, probably together with CDPK1 and CDPK5. Involved in merosome egress from host hepatocytes, probably together with CDPK5. During the asexual blood stage, involved in merozoite invasion of host erythrocytes and motility by stabilizing the inner membrane complex, a structure below the plasma membrane which acts as an anchor for the glidosome, an acto-myosin motor. Required for cell cycle progression in the male gametocyte. During male gametogenesis in the mosquito gut, required to initiate the first round of DNA replication, probably by facilitating the assembly of the pre-replicative MCM complex, to assemble the first mitotic spindle and, at the end of gametogenesis, to initiate axoneme motility, cytokinesis and subsequent exflagellation. For each of these steps, may phosphorylate SOC1, SOC2 and SOC3, respectively. Together with CDPK1, regulates ookinete gliding in the mosquito host midgut. During male gametogenesis in the mosquito gut, required to initiate the first round of DNA replication, probably by facilitating the assembly of the pre-replicative MCM complex, and to assemble the first mitotic spindle. Functionally, at the end of male gametogenesis in the mosquito gut, required to initiate axoneme motility, cytokinesis and subsequent exflagellation. In Plasmodium berghei (strain Anka), this protein is Calcium-dependent protein kinase 4.